Consider the following 491-residue polypeptide: 3-octaprenyl-4-hydroxybenzoate carboxy-lyase (491 aa).

Asn172 serves as a coordination point for Mn(2+). Residues 175 to 177 (IYR), 189 to 191 (RWL), and 194 to 195 (RG) contribute to the prenylated FMN site. Mn(2+) is bound at residue Glu238. The active-site Proton donor is the Asp287.

This sequence belongs to the UbiD family. Homohexamer. It depends on prenylated FMN as a cofactor. The cofactor is Mn(2+).

Its subcellular location is the cell membrane. The catalysed reaction is a 4-hydroxy-3-(all-trans-polyprenyl)benzoate + H(+) = a 2-(all-trans-polyprenyl)phenol + CO2. The protein operates within cofactor biosynthesis; ubiquinone biosynthesis. Its function is as follows. Catalyzes the decarboxylation of 3-octaprenyl-4-hydroxy benzoate to 2-octaprenylphenol, an intermediate step in ubiquinone biosynthesis. The sequence is that of 3-octaprenyl-4-hydroxybenzoate carboxy-lyase from Klebsiella pneumoniae subsp. pneumoniae (strain ATCC 700721 / MGH 78578).